Reading from the N-terminus, the 110-residue chain is Large ribosomal subunit protein uL22 (110 aa).

This sequence belongs to the universal ribosomal protein uL22 family. Part of the 50S ribosomal subunit.

Functionally, this protein binds specifically to 23S rRNA; its binding is stimulated by other ribosomal proteins, e.g. L4, L17, and L20. It is important during the early stages of 50S assembly. It makes multiple contacts with different domains of the 23S rRNA in the assembled 50S subunit and ribosome. Its function is as follows. The globular domain of the protein is located near the polypeptide exit tunnel on the outside of the subunit, while an extended beta-hairpin is found that lines the wall of the exit tunnel in the center of the 70S ribosome. The protein is Large ribosomal subunit protein uL22 of Pseudomonas savastanoi pv. phaseolicola (strain 1448A / Race 6) (Pseudomonas syringae pv. phaseolicola (strain 1448A / Race 6)).